The chain runs to 255 residues: 4-hydroxy-tetrahydrodipicolinate reductase (255 aa).

NAD(+) is bound by residues 9–14 (GFKGRM), 89–91 (GTT), and 115–118 (APNF). Residue H145 is the Proton donor/acceptor of the active site. (S)-2,3,4,5-tetrahydrodipicolinate is bound at residue H146. The active-site Proton donor is the K149. 155-156 (GT) contacts (S)-2,3,4,5-tetrahydrodipicolinate.

This sequence belongs to the DapB family.

Its subcellular location is the cytoplasm. The enzyme catalyses (S)-2,3,4,5-tetrahydrodipicolinate + NAD(+) + H2O = (2S,4S)-4-hydroxy-2,3,4,5-tetrahydrodipicolinate + NADH + H(+). It catalyses the reaction (S)-2,3,4,5-tetrahydrodipicolinate + NADP(+) + H2O = (2S,4S)-4-hydroxy-2,3,4,5-tetrahydrodipicolinate + NADPH + H(+). Its pathway is amino-acid biosynthesis; L-lysine biosynthesis via DAP pathway; (S)-tetrahydrodipicolinate from L-aspartate: step 4/4. Catalyzes the conversion of 4-hydroxy-tetrahydrodipicolinate (HTPA) to tetrahydrodipicolinate. In Streptococcus mutans serotype c (strain ATCC 700610 / UA159), this protein is 4-hydroxy-tetrahydrodipicolinate reductase.